The sequence spans 177 residues: Co-chaperone protein HscB homolog (177 aa).

The region spanning 8 to 80 (DYFSLFGMPR…LSRAQYLLEL (73 aa)) is the J domain.

It belongs to the HscB family. In terms of assembly, interacts with HscA and stimulates its ATPase activity.

Co-chaperone involved in the maturation of iron-sulfur cluster-containing proteins. Seems to help targeting proteins to be folded toward HscA. The sequence is that of Co-chaperone protein HscB homolog from Azoarcus sp. (strain BH72).